The primary structure comprises 213 residues: tRNA (guanine-N(7)-)-methyltransferase (213 aa).

S-adenosyl-L-methionine-binding residues include Glu43, Asp68, Asn95, and Asn117. Substrate contacts are provided by residues Asp153 and 190–193 (TEYE).

It belongs to the class I-like SAM-binding methyltransferase superfamily. TrmB family.

The catalysed reaction is guanosine(46) in tRNA + S-adenosyl-L-methionine = N(7)-methylguanosine(46) in tRNA + S-adenosyl-L-homocysteine. It participates in tRNA modification; N(7)-methylguanine-tRNA biosynthesis. Catalyzes the formation of N(7)-methylguanine at position 46 (m7G46) in tRNA. In Desulfitobacterium hafniense (strain DSM 10664 / DCB-2), this protein is tRNA (guanine-N(7)-)-methyltransferase.